Here is a 1025-residue protein sequence, read N- to C-terminus: MNQGYAELHCLSNFSFQRGASSALELFQRAKKHGYQALAITDECTLAGIVRAWQAAKSVELPLIIGSEIRIENGPKLVLLVENIEGYQALCGLITQARRRTQKGQYQILREDFSEPLPGLLVLWVPEAVDEVEEGRWLKQTFGERLWLAVQLHRGQNDQQRLAALLSLADELQIPAVASGDVHMHARGRRALQDTMTAIRHHVPVAEAGLRLHPNGERHLRSLDVLRELYPQTLLDESLKLARRCTFDLGELRYQYPKELVPEEHSASSWLRHLTEQGIAWRWPKGAQPKVLKQIDDELELIAELGYESYFLTVHDVVRFAREQKILCQGRGSAANSAVCFALGITEIDPDRTTLLFERFMSRERNEPPDIDVDFEHERREEVLQYVFRRYGRRRAALTAVVSTYHASGAIRDVAKALGLPPDQINALADCCGHWSDETPPVERLREGGFDPESPLLHRVLSLTGQLIGFPRHLSQHPGGFVISEQPLDTLVPVENAAMADRTIIQWDKDDLDAVGLLKVDILALGMLSAIRRCFDLLRRHRHQDLSLATIPPEDRPTYDMISRADTIGVFQIESRAQMSMLPRLRPQTFYDLVIEVAIVRPGPIQGGMVHPYLRRRNKEEEETYPSPELEVVLKRTLGVPLFQEQVMQIAIVAADYSPGEADQLRRSMAAWKRHGGLEPHKERLAAGMKKNGYSPEFAAQIFEQIKGFGSYGFPESHAASFALLTYASCWLKCHEPAAFACALINSWPMGFYSPDQILQDARRHHLQIRPVDVRASDWDCSLEPIAGEQPAIRMGLRMIKGFREEDARSIEKARARGAFADVADLGERAGLDSRAQALLADAGALRGLAGHRHRARWEVAGVQKQLGLFAGLPSQEEPDVLLPTPSVSEDLFTDYATLGTTLGPHPLTLLRNELRARRCRSSRDLLEVEHGRPVSVAGLVTGRQRPGTASGVTFVTLEDEFGNVNVVVWRDLAERQRQVLVGSQLLKVDGRWEREGEVRHLIAGRLSDLTPLLNGIRVQSRDFH.

This sequence belongs to the DNA polymerase type-C family. DnaE2 subfamily.

It localises to the cytoplasm. The enzyme catalyses DNA(n) + a 2'-deoxyribonucleoside 5'-triphosphate = DNA(n+1) + diphosphate. Functionally, DNA polymerase involved in damage-induced mutagenesis and translesion synthesis (TLS). It is not the major replicative DNA polymerase. This is Error-prone DNA polymerase from Pseudomonas fluorescens (strain Pf0-1).